A 208-amino-acid chain; its full sequence is Small ribosomal subunit protein uS4 (208 aa).

The S4 RNA-binding domain occupies 98–160 (CRLDNVVYRM…AKKQSRIQLA (63 aa)).

It belongs to the universal ribosomal protein uS4 family. In terms of assembly, part of the 30S ribosomal subunit. Contacts protein S5. The interaction surface between S4 and S5 is involved in control of translational fidelity.

In terms of biological role, one of the primary rRNA binding proteins, it binds directly to 16S rRNA where it nucleates assembly of the body of the 30S subunit. Functionally, with S5 and S12 plays an important role in translational accuracy. In Vesicomyosocius okutanii subsp. Calyptogena okutanii (strain HA), this protein is Small ribosomal subunit protein uS4.